Reading from the N-terminus, the 805-residue chain is Transforming acidic coiled-coil-containing protein 1 (805 aa).

Position 2 is an N-acetylalanine (alanine 2). Alanine 2 carries N-myristoyl glycine lipidation. The tract at residues 2-55 (AFSPWQILSPVQWAKWTWSAVRGGAAGEDEAGGPEGDPEEEDSQAETKSLSFSS) is interaction with LSM7 and SNRPG. Serine 4, serine 10, and serine 44 each carry phosphoserine. A disordered region spans residues 23-140 (RGGAAGEDEA…SVKNFREEPE (118 aa)). Over residues 28 to 45 (GEDEAGGPEGDPEEEDSQ) the composition is skewed to acidic residues. Composition is skewed to polar residues over residues 47–60 (ETKS…SEGN) and 111–128 (SKTC…QAID). A compositionally biased stretch (basic and acidic residues) spans 130–140 (HSVKNFREEPE). Residues serine 147 and serine 153 each carry the phosphoserine modification. Residues 152 to 259 (FSIETKDSTD…TNAAVEGTPL (108 aa)) form an interaction with TDRD7 region. An interaction with YEATS4 region spans residues 206–427 (EASAEADLKA…DPDNFDESMD (222 aa)). 2 consecutive SPAZ domains span residues 215–297 (AGNS…TPGT) and 359–507 (SKSA…TDEE). Positions 215 to 457 (AGNSCPELVP…VNEILESPKK (243 aa)) are disordered. A Bipartite nuclear localization signal 1 motif is present at residues 226 to 241 (RRSKLRKPKPVPLRKK). Over residues 226-242 (RRSKLRKPKPVPLRKKA) the composition is skewed to basic residues. Position 228 is a phosphoserine; by AURKC (serine 228). Residues serine 248 and serine 276 each carry the phosphoserine modification. Polar residues-rich tracts occupy residues 296–305 (GTLSSDTNDS), 377–413 (LSQT…SSEG), and 431–447 (PTTT…TGNH). 2 positions are modified to phosphoserine: serine 381 and serine 406. Positions 455 to 471 (PKKAKSRLITSGCKVKK) match the Bipartite nuclear localization signal 2 motif. Phosphoserine is present on serine 483. The tract at residues 493 to 526 (ISDISNRDGHATDEEKLASTSCGQKSAGAEVKGE) is disordered. Over residues 497-509 (SNRDGHATDEEKL) the composition is skewed to basic and acidic residues. Tyrosine 533 is modified (phosphotyrosine). A Phosphoserine modification is found at serine 591. A coiled-coil region spans residues 610–805 (IREEIITKEI…ELIAKLGKTD (196 aa)). The segment at 701 to 805 (VLEGFKKNEE…ELIAKLGKTD (105 aa)) is interaction with CH-TOG.

The protein belongs to the TACC family. In terms of assembly, interacts with KIAA0097/CH-TOG and with the oncogenic transcription factor YEATS4. Interacts with AURKA, AURKB and AURKC. Interacts with LSM7, TDRD7 and SNRPG. Interacts with GCN5L2 and PCAF. Interacts with the thyroid hormone receptors THRB and THRA, predominantly with isoform alpha-2. The interaction with THRA isoform alpha-1 and THRB is decreased in the presence of thyroid hormone T3. Also interacts with other nuclear receptors, including ESR1, NR3C1, PPARG, RARA and RXRA, preferentially in the absence of their hormonal ligands. Isoform 1 is heavily phosphorylated; isoform 6 is not. Isoform 1, isoform 3 and isoform 5 are ubiquitous. Isoform 2 is strongly expressed in the brain, weakly detectable in lung and colon, and overexpressed in gastric cancer. Isoform 4 is not detected in normal tissues, but strong expression was found in gastric cancer tissues. Down-regulated in a subset of cases of breast cancer.

The protein localises to the cytoplasm. Its subcellular location is the nucleus. The protein resides in the cytoskeleton. It localises to the microtubule organizing center. It is found in the centrosome. The protein localises to the midbody. Its subcellular location is the membrane. Functionally, involved in transcription regulation induced by nuclear receptors, including in T3 thyroid hormone and all-trans retinoic acid pathways. Might promote the nuclear localization of the receptors. Likely involved in the processes that promote cell division prior to the formation of differentiated tissues. This chain is Transforming acidic coiled-coil-containing protein 1 (TACC1), found in Homo sapiens (Human).